Here is a 353-residue protein sequence, read N- to C-terminus: Photosystem II D2 protein (353 aa).

T2 carries the N-acetylthreonine modification. T2 is subject to Phosphothreonine. A helical transmembrane segment spans residues 41-61 (CAYFALGGWFTGTTFVTSWYT). Residue H118 coordinates chlorophyll a. Residues 125–141 (GFMLRQFELARSVQLRP) traverse the membrane as a helical segment. 2 residues coordinate pheophytin a: Q130 and N143. The chain crosses the membrane as a helical span at residues 153–166 (VFVSVFLIYPLGQS). H198 is a chlorophyll a binding site. Residues 208-228 (AALLCAIHGATVENTLFEDGD) form a helical membrane-spanning segment. A plastoquinone contacts are provided by H215 and F262. H215 serves as a coordination point for Fe cation. H269 provides a ligand contact to Fe cation. The helical transmembrane segment at 279-295 (GLWMSALGVVGLALNLR) threads the bilayer.

The protein belongs to the reaction center PufL/M/PsbA/D family. In terms of assembly, PSII is composed of 1 copy each of membrane proteins PsbA, PsbB, PsbC, PsbD, PsbE, PsbF, PsbH, PsbI, PsbJ, PsbK, PsbL, PsbM, PsbT, PsbX, PsbY, PsbZ, Psb30/Ycf12, at least 3 peripheral proteins of the oxygen-evolving complex and a large number of cofactors. It forms dimeric complexes. Requires The D1/D2 heterodimer binds P680, chlorophylls that are the primary electron donor of PSII, and subsequent electron acceptors. It shares a non-heme iron and each subunit binds pheophytin, quinone, additional chlorophylls, carotenoids and lipids. There is also a Cl(-1) ion associated with D1 and D2, which is required for oxygen evolution. The PSII complex binds additional chlorophylls, carotenoids and specific lipids. as cofactor.

The protein localises to the plastid. It localises to the chloroplast thylakoid membrane. The catalysed reaction is 2 a plastoquinone + 4 hnu + 2 H2O = 2 a plastoquinol + O2. Its function is as follows. Photosystem II (PSII) is a light-driven water:plastoquinone oxidoreductase that uses light energy to abstract electrons from H(2)O, generating O(2) and a proton gradient subsequently used for ATP formation. It consists of a core antenna complex that captures photons, and an electron transfer chain that converts photonic excitation into a charge separation. The D1/D2 (PsbA/PsbD) reaction center heterodimer binds P680, the primary electron donor of PSII as well as several subsequent electron acceptors. D2 is needed for assembly of a stable PSII complex. The polypeptide is Photosystem II D2 protein (Dioscorea elephantipes (Elephant's foot yam)).